The chain runs to 259 residues: Small ribosomal subunit protein uS7m (259 aa).

Residues 1–39 (MLRLIKQPLFRCASSGHLMKESLVFIHQTRTFQVGKFTS) constitute a mitochondrion transit peptide. At Thr157 the chain carries Phosphothreonine.

It belongs to the universal ribosomal protein uS7 family. Component of the mitochondrial small ribosomal subunit (mt-SSU). Mature yeast 74S mitochondrial ribosomes consist of a small (37S) and a large (54S) subunit. The 37S small subunit contains a 15S ribosomal RNA (15S mt-rRNA) and at least 32 different proteins. The 54S large subunit contains a 21S rRNA (21S mt-rRNA) and at least 45 different proteins.

It is found in the mitochondrion. Functionally, component of the mitochondrial ribosome (mitoribosome), a dedicated translation machinery responsible for the synthesis of mitochondrial genome-encoded proteins, including at least some of the essential transmembrane subunits of the mitochondrial respiratory chain. The mitoribosomes are attached to the mitochondrial inner membrane and translation products are cotranslationally integrated into the membrane. This Schizosaccharomyces pombe (strain 972 / ATCC 24843) (Fission yeast) protein is Small ribosomal subunit protein uS7m (rsm7).